The chain runs to 78 residues: MSQVCQVTGKRPVVGNNRSHARNATRRRFLPNLQSHRFWVESEKRWVKLRISTKGMRIIDKNGIDTVLADLRGRGVKV.

The segment at 1-20 is disordered; that stretch reads MSQVCQVTGKRPVVGNNRSH.

This sequence belongs to the bacterial ribosomal protein bL28 family.

The sequence is that of Large ribosomal subunit protein bL28 from Idiomarina loihiensis (strain ATCC BAA-735 / DSM 15497 / L2-TR).